A 183-amino-acid chain; its full sequence is Capsid protein (183 aa).

The disordered stretch occupies residues 136–183 (NAPILSTLPETTVVRRRGRSPRRRTPSPRRRRSQSPRRRRSQSRESQC). Residues 149–176 (VRRRGRSPRRRTPSPRRRRSQSPRRRRS) are compositionally biased toward basic residues. A phosphoserine; by host mark is found at S155, S162, and S170. A 1; half-length repeat occupies 155-161 (SPRRRTP). The tract at residues 155–177 (SPRRRTPSPRRRRSQSPRRRRSQ) is 3 X 8 AA repeats of S-P-R-R-R-[PR]-S-Q. The short motif at 158–175 (RRTPSPRRRRSQSPRRRR) is the Bipartite nuclear localization signal element. 2 consecutive repeat copies span residues 162–169 (SPRRRRSQ) and 170–177 (SPRRRRSQ). The RNA binding stretch occupies residues 177–183 (QSRESQC).

It belongs to the orthohepadnavirus core antigen family. Homodimerizes, then multimerizes. Interacts with cytosol exposed regions of viral L glycoprotein present in the reticulum-to-Golgi compartment. Interacts with human FLNB. Phosphorylated form interacts with host importin alpha; this interaction depends on the exposure of the NLS, which itself depends upon genome maturation and/or phosphorylation of the capsid protein. Interacts with host NUP153. Post-translationally, phosphorylated by host SRPK1, SRPK2, and maybe protein kinase C or GAPDH. Phosphorylation is critical for pregenomic RNA packaging. Protein kinase C phosphorylation is stimulated by HBx protein and may play a role in transport of the viral genome to the nucleus at the late step during the viral replication cycle.

The protein resides in the virion. The protein localises to the host cytoplasm. Functionally, self assembles to form an icosahedral capsid. Most capsids appear to be large particles with an icosahedral symmetry of T=4 and consist of 240 copies of capsid protein, though a fraction forms smaller T=3 particles consisting of 180 capsid proteins. Entering capsids are transported along microtubules to the nucleus. Phosphorylation of the capsid is thought to induce exposure of nuclear localization signal in the C-terminal portion of the capsid protein that allows binding to the nuclear pore complex via the importin (karyopherin-) alpha and beta. Capsids are imported in intact form through the nuclear pore into the nuclear basket, where it probably binds NUP153. Only capsids that contain the mature viral genome can release the viral DNA and capsid protein into the nucleoplasm. Immature capsids get stuck in the basket. Capsids encapsulate the pre-genomic RNA and the P protein. Pre-genomic RNA is reverse-transcribed into DNA while the capsid is still in the cytoplasm. The capsid can then either be directed to the nucleus, providing more genomes for transcription, or bud through the endoplasmic reticulum to provide new virions. This Hepatitis B virus genotype B2 (isolate Indonesia/pIDW420/1988) (HBV-B) protein is Capsid protein.